A 331-amino-acid polypeptide reads, in one-letter code: Centriolar satellite-associated tubulin polyglutamylase complex regulator 1 (331 aa).

Residues 1–111 form a required for interaction with PCM1 region; the sequence is MLSPERLALP…HCLLQLLCPD (111 aa). Residues 1–225 form a required for interaction with TPGS1, LRRC49, and TTLL1 region; that stretch reads MLSPERLALP…SCPPPALVKE (225 aa). A required for interaction with TPGS2 region spans residues 112–331; sequence FPLELTQKAA…STEETDESET (220 aa). A disordered region spans residues 292 to 331; that stretch reads SCLPSRTPPRVGSPWKPLHRSRKLDAESDGSTEETDESET. Acidic residues predominate over residues 318-331; the sequence is ESDGSTEETDESET. Ser319 carries the phosphoserine modification.

This sequence belongs to the CSTPP1 family. Interacts with PCM1. Interacts with TTLL1, TPGS1, TPGS2 and LRRC49; the interactions link CSTPP1 to the complex TPGC. Binds to alpha-tubulin.

The protein resides in the cytoplasm. The protein localises to the cytoskeleton. It localises to the microtubule organizing center. It is found in the centrosome. Its subcellular location is the centriolar satellite. Functionally, regulator of the tubulin polyglutamylase complex (TPGC) that controls cytoskeletal organization, nuclear shape, and cilium disassembly by balancing microtubule and actin assembly. Regulates the assembly and stability of the TPGC and thereby modulates polyglutamylation of the microtubule, which antagonizes MAP4 binding. The polypeptide is Centriolar satellite-associated tubulin polyglutamylase complex regulator 1 (Cstpp1) (Rattus norvegicus (Rat)).